A 2178-amino-acid polypeptide reads, in one-letter code: Streptococcal hemagglutinin (2178 aa).

The N-terminal stretch at 1 to 90 (MFFKRQKGQY…AVVTSSSVYA (90 aa)) is a signal peptide. The non-repeat region 1 (NR1) stretch occupies residues 91 to 137 (EEEQALEKVIDTRDVLATRGEAVLSEEAATTLSSEGANPVESLSDTL). A ser-rich region 1 (SR1) region spans residues 138–219 (SASESASANS…SLISSDSSNS (82 aa)). Residues 192 to 244 (TSQSFSSTTSSTQSSNNESLISSDSSNSLNTNQSVSARNQNARVRTRRAVAAN) show a composition bias toward low complexity. Disordered regions lie at residues 192-246 (TSQS…ANDT), 495-557 (VSAS…SVSA), 584-653 (SAST…SVSA), 836-857 (SAST…SVSA), 884-917 (SAST…SVSA), 944-993 (SAST…SESA), 1020-1289 (SASV…SVSA), 1341-1390 (ASTS…ESAS), 1488-1685 (SASV…SVSA), 1725-1901 (ASTS…SAST), and 2119-2151 (LSQS…GESE). The interval 220 to 449 (LNTNQSVSAR…ANRVVKDLQI (230 aa)) is non-repeat region 2 (NR2). Positions 450 to 2143 (SKSNSASQSS…SMHDRISKGQ (1694 aa)) are ser-rich region 2 (SR2). The span at 2119–2130 (LSQSLSDSQSTS) shows a compositional bias: low complexity. Residues 2144 to 2148 (LPRTG) carry the LPXTG sorting signal motif. A Pentaglycyl murein peptidoglycan amidated threonine modification is found at Thr-2147. The propeptide at 2148 to 2178 (GESESKASILALGIGALGLAFKKRKKNESED) is removed by sortase.

It belongs to the serine-rich repeat protein (SRRP) family. In terms of processing, the protein is glycosylated in vivo; constructs without SR1 and SR2 are not glycosylated.

It localises to the secreted. The protein localises to the cell wall. Its function is as follows. A cell wall protein involved with PadA in host cell interactions required for colonization and pathogensis. Mediates hemagglutination and adherence to ghst glycoproteins. Recognizes fetuin-A (AHSG), a highly glycosylated human plasma protein, also involved in recognition of human platelets, probably via platelet glycoprotein Ib alpha (GP1BA). Acts in concert with PadA to promote binding to glycosylated human fibronectin (FN1) and vitronectin (VTN), and biofilm formation. Plays a major role in fibronectin and vitronectin binding; binding is mediated by glycosylated regions. Probably mediates interaction of PadA with resting platelets. This chain is Streptococcal hemagglutinin, found in Streptococcus gordonii (strain Challis / ATCC 35105 / BCRC 15272 / CH1 / DL1 / V288).